The chain runs to 404 residues: ATP phosphoribosyltransferase regulatory subunit (404 aa).

The protein belongs to the class-II aminoacyl-tRNA synthetase family. HisZ subfamily. Heteromultimer composed of HisG and HisZ subunits.

The protein resides in the cytoplasm. Its pathway is amino-acid biosynthesis; L-histidine biosynthesis; L-histidine from 5-phospho-alpha-D-ribose 1-diphosphate: step 1/9. Its function is as follows. Required for the first step of histidine biosynthesis. May allow the feedback regulation of ATP phosphoribosyltransferase activity by histidine. This chain is ATP phosphoribosyltransferase regulatory subunit, found in Picosynechococcus sp. (strain ATCC 27264 / PCC 7002 / PR-6) (Agmenellum quadruplicatum).